We begin with the raw amino-acid sequence, 209 residues long: Cytochrome bo(3) ubiquinol oxidase subunit 3 (209 aa).

At 1 to 29 the chain is on the cytoplasmic side; that stretch reads MSTAVLNKHLADAHEVGHDHDHAHDSGGN. Residues 30–50 traverse the membrane as a helical segment; that stretch reads TVFGFWLYLMTDCVLFASVFA. Topologically, residues 51-72 are periplasmic; it reads TYAVLVHHTAGGPSGKDIFELP. The chain crosses the membrane as a helical span at residues 73–93; it reads YVLVETAILLVSSCTYGLAML. The Cytoplasmic portion of the chain corresponds to 94–102; that stretch reads SAHKGAKGQ. A helical membrane pass occupies residues 103–123; it reads AIAWLGVTFLLGAAFIGMEIN. Residues 124–143 lie on the Periplasmic side of the membrane; sequence EFHHLIAEGFGPSRSAFLSS. The helical transmembrane segment at 144–164 threads the bilayer; sequence FFTLVGMHGLHVSAGLLWMLV. Topologically, residues 165-186 are cytoplasmic; the sequence is LMAQIWTRGLTAQNNTRMMCLS. A helical membrane pass occupies residues 187-207; that stretch reads LFWHFLDIVWICVFTVVYLMG. At 208–209 the chain is on the periplasmic side; sequence AL.

Belongs to the cytochrome c oxidase subunit 3 family. Heterooctamer of two A chains, two B chains, two C chains and two D chains.

It is found in the cell inner membrane. In terms of biological role, cytochrome bo(3) ubiquinol terminal oxidase is the component of the aerobic respiratory chain of E.coli that predominates when cells are grown at high aeration. Has proton pump activity across the membrane in addition to electron transfer, pumping 2 protons/electron. This is Cytochrome bo(3) ubiquinol oxidase subunit 3 (cyoC) from Pseudomonas aeruginosa (strain ATCC 15692 / DSM 22644 / CIP 104116 / JCM 14847 / LMG 12228 / 1C / PRS 101 / PAO1).